We begin with the raw amino-acid sequence, 128 residues long: Nucleoside diphosphate kinase B (128 aa).

An N-acetylmethionine modification is found at methionine 1. Residues lysine 9, phenylalanine 39, threonine 70, arginine 81, and asparagine 91 each coordinate ATP. The Pros-phosphohistidine intermediate role is filled by histidine 94.

It belongs to the NDK family. The cofactor is Mg(2+).

It is found in the cytoplasm. The protein resides in the nucleus. The protein localises to the cell projection. It localises to the lamellipodium. Its subcellular location is the ruffle. It carries out the reaction a 2'-deoxyribonucleoside 5'-diphosphate + ATP = a 2'-deoxyribonucleoside 5'-triphosphate + ADP. The catalysed reaction is a ribonucleoside 5'-diphosphate + ATP = a ribonucleoside 5'-triphosphate + ADP. Its function is as follows. Major role in the synthesis of nucleoside triphosphates other than ATP. This is Nucleoside diphosphate kinase B (nme2) from Merluccius bilinearis (Silver hake).